We begin with the raw amino-acid sequence, 126 residues long: Anti-adapter protein IraD (126 aa).

Belongs to the GpW/Gp25 family. IraD subfamily. Interacts with RssB.

Its subcellular location is the cytoplasm. Its function is as follows. Inhibits RpoS proteolysis by regulating RssB activity, thereby increasing the stability of the sigma stress factor RpoS during oxidative stress. Its effect on RpoS stability is due to its interaction with RssB, which probably blocks the interaction of RssB with RpoS, and the consequent delivery of the RssB-RpoS complex to the ClpXP protein degradation pathway. This chain is Anti-adapter protein IraD, found in Salmonella choleraesuis (strain SC-B67).